The primary structure comprises 439 residues: Serine/threonine-protein kinase 2 (439 aa).

In terms of domain architecture, Protein kinase spans 87 to 439 (NDDFYHISTG…IFSDWINGGN (353 aa)). Residues 93 to 101 (ISTGGYGIV) and K117 contribute to the ATP site. D307 acts as the Proton acceptor in catalysis.

This sequence belongs to the protein kinase superfamily. Ser/Thr protein kinase family. Poxviruses subfamily. In terms of processing, phosphorylated in vivo. Autophosphorylated in vitro.

The protein resides in the host endoplasmic reticulum. The protein localises to the host endoplasmic reticulum-Golgi intermediate compartment. It catalyses the reaction L-seryl-[protein] + ATP = O-phospho-L-seryl-[protein] + ADP + H(+). The enzyme catalyses L-threonyl-[protein] + ATP = O-phospho-L-threonyl-[protein] + ADP + H(+). Essential serine-protein kinase involved in the early stage of virion morphogenesis. This Vaccinia virus (strain Ankara) (VACV) protein is Serine/threonine-protein kinase 2 (OPG054).